A 210-amino-acid chain; its full sequence is Cell division protein SepF (210 aa).

The interval 13 to 78 (GFGEPTGYDY…VTSTAMNPPM (66 aa)) is disordered. Acidic residues predominate over residues 22 to 31 (YDYDEMEGDD). The span at 47–60 (RSEEPHPRPSEPEM) shows a compositional bias: basic and acidic residues. Residues 64–78 (VNTSAVTSTAMNPPM) are compositionally biased toward polar residues.

It belongs to the SepF family. As to quaternary structure, homodimer. Interacts with FtsZ.

It localises to the cytoplasm. Functionally, cell division protein that is part of the divisome complex and is recruited early to the Z-ring. Probably stimulates Z-ring formation, perhaps through the cross-linking of FtsZ protofilaments. Its function overlaps with FtsA. This chain is Cell division protein SepF, found in Cyanothece sp. (strain PCC 7425 / ATCC 29141).